The following is a 349-amino-acid chain: Threonine-rich protein (349 aa).

Residues 1–19 (MKGLTLACIAATVVAASHA) form the signal peptide. N-linked (GlcNAc...) asparagine glycosylation is present at N257. The tract at residues 300 to 326 (QPDVSPMSVRKRRQAESAEEDDDLVGD) is disordered. Acidic residues predominate over residues 316-326 (SAEEDDDLVGD). Residues 316 to 349 (SAEEDDDLVGDMEDLKELEQEIQEALEEVEKLDV) adopt a coiled-coil conformation.

Component of the acid-insoluble and acid-soluble organic matrix of calcified layers of the shell (at protein level).

It is found in the secreted. The sequence is that of Threonine-rich protein from Lottia gigantea (Giant owl limpet).